The sequence spans 291 residues: B3 domain-containing protein At2g16210 (291 aa).

The TF-B3 1 DNA-binding region spans 19-114; the sequence is FFKVVQSINV…HFTVNIFKLD (96 aa). The span at 149–159 shows a compositional bias: polar residues; it reads VSSNRGQTTAA. The tract at residues 149–182 is disordered; sequence VSSNRGQTTAAESKGRKLNLGKRAAKESQSSKRT. A compositionally biased stretch (basic and acidic residues) spans 172 to 182; the sequence is AAKESQSSKRT. A DNA-binding region (TF-B3 2) is located at residues 200–291; it reads AAAFTILFKQ…KELLLVVSKP (92 aa).

Its subcellular location is the nucleus. The chain is B3 domain-containing protein At2g16210 from Arabidopsis thaliana (Mouse-ear cress).